A 191-amino-acid polypeptide reads, in one-letter code: Small ribosomal subunit protein uS5 (191 aa).

Positions 21 to 84 (FADRLVAINR…EQAKRQMIRV (64 aa)) constitute an S5 DRBM domain. The disordered stretch occupies residues 155–191 (LRKESSPRSVAQRRGKKVADILPKVDAAPAPAETAEA). Over residues 181 to 191 (AAPAPAETAEA) the composition is skewed to low complexity.

The protein belongs to the universal ribosomal protein uS5 family. Part of the 30S ribosomal subunit. Contacts proteins S4 and S8.

In terms of biological role, with S4 and S12 plays an important role in translational accuracy. Its function is as follows. Located at the back of the 30S subunit body where it stabilizes the conformation of the head with respect to the body. This Roseobacter denitrificans (strain ATCC 33942 / OCh 114) (Erythrobacter sp. (strain OCh 114)) protein is Small ribosomal subunit protein uS5.